The primary structure comprises 229 residues: Ribonuclease 3 (229 aa).

Residues 5-127 (LDRLERKLGY…LIGAIYLDTG (123 aa)) enclose the RNase III domain. Glu40 serves as a coordination point for Mg(2+). Asp44 is an active-site residue. The Mg(2+) site is built by Asp113 and Glu116. Glu116 is a catalytic residue. The DRBM domain maps to 154-224 (DPKTRLQEFL…AAAALVALGV (71 aa)).

Belongs to the ribonuclease III family. As to quaternary structure, homodimer. Mg(2+) is required as a cofactor.

Its subcellular location is the cytoplasm. The enzyme catalyses Endonucleolytic cleavage to 5'-phosphomonoester.. Its function is as follows. Digests double-stranded RNA. Involved in the processing of primary rRNA transcript to yield the immediate precursors to the large and small rRNAs (23S and 16S). Processes some mRNAs, and tRNAs when they are encoded in the rRNA operon. Processes pre-crRNA and tracrRNA of type II CRISPR loci if present in the organism. This is Ribonuclease 3 from Pseudomonas aeruginosa (strain LESB58).